The chain runs to 304 residues: MTQKIKCALIGPGNIGTDLLYKLKRSPFLEPVWMIGIDPESEGLKRATDMGLKTCATGVDGFLPHVLEDNVQIAFDATSAYVHAENSRKLNALGVLMIDLTPAAIGPFCVPPVNLKEHVGRREMNVNMVTCGGQATIPMVAAVSRVQPVAYGEIVATVSSKSAGPGTRKNIDEFTRTTAGAVEKVGGAKKGKAIIIINPAEPPLVMRDTVHCLTETAPDQAAITESIHAMIKEVQKYVPGYRLVNGPVFDGNRVSVYMEVTGLGDFLPTYAGNLDIMTAAGARTAEMFAEEMIKGTLKLEPVHA.

The Acyl-thioester intermediate role is filled by Cys131. Residues Ser162 to Asn170 and Asn273 contribute to the NAD(+) site.

It belongs to the acetaldehyde dehydrogenase family.

The catalysed reaction is acetaldehyde + NAD(+) + CoA = acetyl-CoA + NADH + H(+). This Dechloromonas aromatica (strain RCB) protein is Acetaldehyde dehydrogenase 2.